Consider the following 109-residue polypeptide: Ferredoxin (109 aa).

2 4Fe-4S ferredoxin-type domains span residues 2 to 30 (TYVVNDECVKCKYTDCVDVCPVDCFYEGE) and 31 to 60 (FMLVINPDECIDCGVCVPDCPIDAIKPESP). 2 residues coordinate [3Fe-4S] cluster: Cys-9 and Cys-17. Positions 21, 40, 43, and 46 each coordinate [4Fe-4S] cluster. Cys-50 lines the [3Fe-4S] cluster pocket.

Requires [4Fe-4S] cluster as cofactor. [3Fe-4S] cluster is required as a cofactor.

Its function is as follows. Ferredoxins are iron-sulfur proteins that transfer electrons in a wide variety of metabolic reactions. The protein is Ferredoxin (fdxA) of Rickettsia felis (strain ATCC VR-1525 / URRWXCal2) (Rickettsia azadi).